A 214-amino-acid polypeptide reads, in one-letter code: Adenylate kinase (214 aa).

Glycine 10 to threonine 15 contributes to the ATP binding site. The segment at serine 30–valine 59 is NMP. AMP is bound by residues threonine 31, arginine 36, lysine 57–valine 59, glycine 85–arginine 88, and glutamine 92. The tract at residues glycine 122–aspartate 159 is LID. ATP-binding positions include arginine 123 and valine 132–tyrosine 133. AMP contacts are provided by arginine 156 and arginine 167. Residue lysine 192 is modified to N6-acetyllysine. Lysine 200 provides a ligand contact to ATP.

It belongs to the adenylate kinase family. Monomer.

The protein resides in the cytoplasm. The enzyme catalyses AMP + ATP = 2 ADP. It participates in purine metabolism; AMP biosynthesis via salvage pathway; AMP from ADP: step 1/1. Its function is as follows. Catalyzes the reversible transfer of the terminal phosphate group between ATP and AMP. Plays an important role in cellular energy homeostasis and in adenine nucleotide metabolism. The sequence is that of Adenylate kinase from Escherichia coli O45:K1 (strain S88 / ExPEC).